The following is a 123-amino-acid chain: Large ribosomal subunit protein bL12 (123 aa).

The protein belongs to the bacterial ribosomal protein bL12 family. In terms of assembly, homodimer. Part of the ribosomal stalk of the 50S ribosomal subunit. Forms a multimeric L10(L12)X complex, where L10 forms an elongated spine to which 2 to 4 L12 dimers bind in a sequential fashion. Binds GTP-bound translation factors.

In terms of biological role, forms part of the ribosomal stalk which helps the ribosome interact with GTP-bound translation factors. Is thus essential for accurate translation. The protein is Large ribosomal subunit protein bL12 of Metamycoplasma arthritidis (strain 158L3-1) (Mycoplasma arthritidis).